We begin with the raw amino-acid sequence, 471 residues long: MANKAVNDFILAMNYDKKKLLTHQGESIENRFIKEGNQLPDEFVVIERKKRSLSTNTSDISVTATNDSRLYPGALLVVDETLLENNPTLLAVDRAPMTYSIDLPGLASSDSFLQVEDPSNSSVRGAVNDLLAKWHQDYGQVNNVPARMQYEKITAHSMEQLKVKFGSDFEKTGNSLDIDFNSVHSGEKQIQIVNFKQIYYTVSVDAVKNPGDVFQDTVTVEDLKQRGISAERPLVYISSVAYGRQVYLKLETTSKSDEVEAAFEALIKGVKVAPQTEWKQILDNTEVKAVILGGDPSSGARVVTGKVDMVEDLIQEGSRFTADHPGLPISYTTSFLRDNVVATFQNSTDYVETKVTAYRNGDLLLDHSGAYVAQYYITWNELSYDHQGKEVLTPKAWDRNGQDLTAHFTTSIPLKGNVRNLSVKIRECTGLAWEWWRTVYEKTDLPLVRKRTISIWGTTLYPQVEDKVEND.

4 beta stranded membrane passes run 158-171, 178-187, 256-265, and 273-285; these read MEQL…DFEK, IDFNSVHSGE, SDEVEAAFEA, and APQT…LDNT. The Conserved undecapeptide signature appears at 427–437; it reads ECTGLAWEWWR. A Cholesterol binding motif is present at residues 459–460; that stretch reads TL.

This sequence belongs to the cholesterol-dependent cytolysin family. As to quaternary structure, homooligomeric pore complex of 35 to 50 subunits; when inserted in the host membrane. In terms of processing, has a slightly altered apparent molecular weight in a secA2 deletion mutant, but no post-translational modifications have been found.

Its subcellular location is the secreted. It is found in the cell wall. The protein localises to the host cell membrane. Functionally, a cholesterol-dependent toxin that causes cytolysis by forming pores in cholesterol containing host membranes. After binding to target membranes, the protein undergoes a major conformation change, leading to its insertion in the host membrane and formation of an oligomeric pore complex. Cholesterol is required for binding to host membranes, membrane insertion and pore formation; cholesterol binding is mediated by a Thr-Leu pair in the C-terminus. Can be reversibly inactivated by oxidation. In Streptococcus pneumoniae serotype 4 (strain ATCC BAA-334 / TIGR4), this protein is Pneumolysin (ply).